The chain runs to 352 residues: Diacylglycerol acyltransferase/mycolyltransferase Ag85C (352 aa).

The signal sequence occupies residues 1 to 37 (MSFIEKVRKLRGAAATMPRRLAIAAVGASLLSGVAVA). Residue 86-87 (LR) participates in substrate binding. Residues 102-112 (FEEFYQSGLSV) form a fibronectin-binding region. Residues S170 and N198 each contribute to the substrate site. Residue S170 is the Nucleophile of the active site. Residue E274 is part of the active site. Substrate is bound by residues 276–279 (LTLR) and 306–308 (HSW). The active site involves H306. The tract at residues 332 to 352 (TAAPAQPAQPAQPAQPAQPAT) is disordered. Residues 333-352 (AAPAQPAQPAQPAQPAQPAT) are compositionally biased toward low complexity.

It belongs to the mycobacterial A85 antigen family. As to quaternary structure, homodimer.

It is found in the secreted. It carries out the reaction an acyl-CoA + a 1,2-diacyl-sn-glycerol = a triacyl-sn-glycerol + CoA. The catalysed reaction is 2 alpha,alpha'-trehalose 6-mycolate = alpha,alpha'-trehalose 6,6'-bismycolate + alpha,alpha-trehalose. Its function is as follows. The antigen 85 proteins (FbpA, FbpB, FbpC) are responsible for the high affinity of mycobacteria to fibronectin, a large adhesive glycoprotein, which facilitates the attachment of M.tuberculosis to murine alveolar macrophages (AMs). They also help to maintain the integrity of the cell wall by catalyzing the transfer of mycolic acids to cell wall arabinogalactan and through the synthesis of alpha,alpha-trehalose dimycolate (TDM, cord factor). They catalyze the transfer of a mycoloyl residue from one molecule of alpha,alpha-trehalose monomycolate (TMM) to another TMM, leading to the formation of TDM. The protein is Diacylglycerol acyltransferase/mycolyltransferase Ag85C (fbpC) of Mycobacterium avium.